The sequence spans 431 residues: Histidinol dehydrogenase (431 aa).

The NAD(+) site is built by tyrosine 127, glutamine 185, and asparagine 208. 3 residues coordinate substrate: serine 234, glutamine 256, and histidine 259. 2 residues coordinate Zn(2+): glutamine 256 and histidine 259. Active-site proton acceptor residues include glutamate 323 and histidine 324. Substrate contacts are provided by histidine 324, aspartate 357, glutamate 411, and histidine 416. Aspartate 357 is a Zn(2+) binding site. Histidine 416 serves as a coordination point for Zn(2+).

It belongs to the histidinol dehydrogenase family. Zn(2+) is required as a cofactor.

It carries out the reaction L-histidinol + 2 NAD(+) + H2O = L-histidine + 2 NADH + 3 H(+). It functions in the pathway amino-acid biosynthesis; L-histidine biosynthesis; L-histidine from 5-phospho-alpha-D-ribose 1-diphosphate: step 9/9. Catalyzes the sequential NAD-dependent oxidations of L-histidinol to L-histidinaldehyde and then to L-histidine. The chain is Histidinol dehydrogenase from Vibrio parahaemolyticus serotype O3:K6 (strain RIMD 2210633).